The chain runs to 253 residues: Major prion protein (253 aa).

An N-terminal signal peptide occupies residues 1 to 22; the sequence is MANLGCWMLVLFVATWSDLGLC. The tract at residues 23–38 is interaction with ADGRG6; it reads KKRPKPGGWNTGGSRY. Positions 23–230 are interaction with GRB2, ERI3 and SYN1; that stretch reads KKRPKPGGWN…ESQAYYQRGS (208 aa). The interval 26–108 is disordered; it reads PKPGGWNTGG…WNKPSKPKTN (83 aa). Tandem repeats lie at residues 51–59, 60–67, 68–75, 76–83, and 84–91. The tract at residues 51-91 is 5 X 8 AA tandem repeats of P-H-G-G-G-W-G-Q; the sequence is PQGGGGWGQPHGGGWGQPHGGGWGQPHGGGWGQPHGGGWGQ. Residues 52–95 show a composition bias toward gly residues; that stretch reads QGGGGWGQPHGGGWGQPHGGGWGQPHGGGWGQPHGGGWGQGGGT. Cu(2+)-binding residues include His61, Gly62, Gly63, His69, Gly70, Gly71, His77, Gly78, Gly79, His85, Gly86, and Gly87. A disulfide bridge links Cys179 with Cys214. N-linked (GlcNAc...) asparagine glycosylation is found at Asn181 and Asn197. Ser230 is lipidated: GPI-anchor amidated serine. Residues 231–253 constitute a propeptide, removed in mature form; it reads SMVLFSSPPVILLISFLIFLIVG.

This sequence belongs to the prion family. In terms of assembly, monomer and homodimer. Has a tendency to aggregate into amyloid fibrils containing a cross-beta spine, formed by a steric zipper of superposed beta-strands. Soluble oligomers may represent an intermediate stage on the path to fibril formation. Copper binding may promote oligomerization. Interacts with GRB2, APP, ERI3/PRNPIP and SYN1. Mislocalized cytosolically exposed PrP interacts with MGRN1; this interaction alters MGRN1 subcellular location and causes lysosomal enlargement. Interacts with KIAA1191. Interacts with ADGRG6. Post-translationally, the glycosylation pattern (the amount of mono-, di- and non-glycosylated forms or glycoforms) seems to differ in normal and CJD prion.

The protein resides in the cell membrane. Its subcellular location is the golgi apparatus. Its function is as follows. Its primary physiological function is unclear. May play a role in neuronal development and synaptic plasticity. May be required for neuronal myelin sheath maintenance. May promote myelin homeostasis through acting as an agonist for ADGRG6 receptor. May play a role in iron uptake and iron homeostasis. Soluble oligomers are toxic to cultured neuroblastoma cells and induce apoptosis (in vitro). Association with GPC1 (via its heparan sulfate chains) targets PRNP to lipid rafts. Also provides Cu(2+) or Zn(2+) for the ascorbate-mediated GPC1 deaminase degradation of its heparan sulfate side chains. The protein is Major prion protein (PRNP) of Homo sapiens (Human).